The following is a 162-amino-acid chain: uncharacterized protein (162 aa).

The disordered stretch occupies residues 1–49 (MNSRTASARGWFSSRPPTSESDLEPATDGPASETTTLSPEATTFNDTRI). A compositionally biased stretch (polar residues) spans 32-46 (SETTTLSPEATTFND). A helical transmembrane segment spans residues 62–82 (MLLSFGIITVIGLAVALVLYI).

It is found in the membrane. This is an uncharacterized protein from Homo sapiens (Human).